We begin with the raw amino-acid sequence, 44 residues long: Thymosin beta-4 (44 aa).

The disordered stretch occupies residues 1 to 44; it reads MSDKPDMGEIQKFNKSKLKKTETQEKNPLPSKETIEQEKQAGES. An N-acetylserine modification is found at Ser-2. A Phosphoserine modification is found at Ser-2. An N6-acetyllysine modification is found at Lys-4. Lys-12 bears the N6-acetyllysine; alternate mark. A Glycyl lysine isopeptide (Lys-Gly) (interchain with G-Cter in SUMO2); alternate cross-link involves residue Lys-12. At Thr-23 the chain carries Phosphothreonine. Lys-26 bears the N6-acetyllysine mark. Residue Ser-31 is modified to Phosphoserine. At Lys-32 the chain carries N6-acetyllysine. Basic and acidic residues predominate over residues 33 to 44; the sequence is ETIEQEKQAGES. Residue Thr-34 is modified to Phosphothreonine. Lys-39 bears the N6-acetyllysine mark.

Belongs to the thymosin beta family. In terms of assembly, identified in a complex composed of ACTA1, COBL, GSN AND TMSB4X. Interacts with SERPINB1. In terms of processing, acSDKP is inactivated by ACE, which removes the dipeptide Lys-Pro from its C-terminus.

The protein localises to the cytoplasm. It localises to the cytoskeleton. In terms of biological role, plays an important role in the organization of the cytoskeleton. Binds to and sequesters actin monomers (G actin) and therefore inhibits actin polymerization. Potent inhibitor of bone marrow derived stem cell differentiation. Acts by inhibits the entry of hematopoietic pluripotent stem cells into the S-phase. The sequence is that of Thymosin beta-4 (TMSB4) from Notamacropus eugenii (Tammar wallaby).